Reading from the N-terminus, the 875-residue chain is Probable dipeptidyl-aminopeptidase B (875 aa).

The disordered stretch occupies residues M1–K90. Residues M1 to K98 are Cytoplasmic-facing. Residues S19 to S28 show a composition bias toward low complexity. A compositionally biased stretch (basic and acidic residues) spans R33 to S46. The chain crosses the membrane as a helical; Signal-anchor for type II membrane protein span at residues V99–L119. Topologically, residues T120–S875 are vacuolar. Residues N354 and N567 are each glycosylated (N-linked (GlcNAc...) asparagine). A disordered region spans residues V689–S715. The span at R699–T708 shows a compositional bias: basic residues. The Charge relay system role is filled by S726. An N-linked (GlcNAc...) asparagine glycan is attached at N785. Active-site charge relay system residues include D803 and H836.

It belongs to the peptidase S9B family.

The protein resides in the vacuole membrane. The catalysed reaction is Release of an N-terminal dipeptide, Xaa-Yaa-|-Zaa-, from a polypeptide, preferentially when Yaa is Pro, provided Zaa is neither Pro nor hydroxyproline.. Functionally, type IV dipeptidyl-peptidase which removes N-terminal dipeptides sequentially from polypeptides having unsubstituted N-termini provided that the penultimate residue is proline. The protein is Probable dipeptidyl-aminopeptidase B (DAPB) of Verticillium alfalfae (strain VaMs.102 / ATCC MYA-4576 / FGSC 10136) (Verticillium wilt of alfalfa).